We begin with the raw amino-acid sequence, 75 residues long: MIGDILLFGTLLMNAGAVLNFKLKKKDTQGFGEESKEPSTGDNIREFLLSLRYFRIFIALWNVFMMLCMIVLFGS.

Residues 1–17 (MIGDILLFGTLLMNAGA) form the signal peptide. The Extracellular portion of the chain corresponds to 18–53 (VLNFKLKKKDTQGFGEESKEPSTGDNIREFLLSLRY). Residues 54-74 (FRIFIALWNVFMMLCMIVLFG) traverse the membrane as a helical segment. Ser75 is a topological domain (cytoplasmic).

Belongs to the SMIM7 family.

Its subcellular location is the membrane. This chain is Small integral membrane protein 7 (Smim7), found in Mus musculus (Mouse).